The primary structure comprises 234 residues: Large ribosomal subunit protein uL1 (234 aa).

The protein belongs to the universal ribosomal protein uL1 family. As to quaternary structure, part of the 50S ribosomal subunit.

Binds directly to 23S rRNA. The L1 stalk is quite mobile in the ribosome, and is involved in E site tRNA release. Its function is as follows. Protein L1 is also a translational repressor protein, it controls the translation of the L11 operon by binding to its mRNA. This chain is Large ribosomal subunit protein uL1, found in Yersinia pseudotuberculosis serotype O:1b (strain IP 31758).